We begin with the raw amino-acid sequence, 488 residues long: Kelch-like protein 15 (488 aa).

One can recognise a BTB domain in the interval 31–98 (LDVTLVIEDH…MYYGTIELSM (68 aa)). The BACK domain maps to 133 to 237 (CAEIMRLLDD…TPSSVFEKVK (105 aa)). Kelch repeat units lie at residues 328-379 (FVFL…VIGR), 381-426 (VYAV…VLGN), and 428-473 (LYIT…NKCK).

As to quaternary structure, homodimer. Interacts with CUL3.

Its subcellular location is the nucleus. Its pathway is protein modification; protein ubiquitination. Functionally, substrate-specific adapter for CUL3 E3 ubiquitin-protein ligase complex. The chain is Kelch-like protein 15 (KLHL15) from Gallus gallus (Chicken).